Reading from the N-terminus, the 316-residue chain is Acetyl-coenzyme A carboxylase carboxyl transferase subunit alpha (316 aa).

Residues 24–291 form the CoA carboxyltransferase C-terminal domain; the sequence is NIKDKADIVD…KEALIQQLNE (268 aa).

Belongs to the AccA family. In terms of assembly, acetyl-CoA carboxylase is a heterohexamer composed of biotin carboxyl carrier protein (AccB), biotin carboxylase (AccC) and two subunits each of ACCase subunit alpha (AccA) and ACCase subunit beta (AccD).

The protein resides in the cytoplasm. The catalysed reaction is N(6)-carboxybiotinyl-L-lysyl-[protein] + acetyl-CoA = N(6)-biotinyl-L-lysyl-[protein] + malonyl-CoA. Its pathway is lipid metabolism; malonyl-CoA biosynthesis; malonyl-CoA from acetyl-CoA: step 1/1. Component of the acetyl coenzyme A carboxylase (ACC) complex. First, biotin carboxylase catalyzes the carboxylation of biotin on its carrier protein (BCCP) and then the CO(2) group is transferred by the carboxyltransferase to acetyl-CoA to form malonyl-CoA. The protein is Acetyl-coenzyme A carboxylase carboxyl transferase subunit alpha of Ruthia magnifica subsp. Calyptogena magnifica.